Reading from the N-terminus, the 369-residue chain is ERCC4 domain-containing protein EP364R (369 aa).

In terms of domain architecture, ERCC4 spans 3 to 101 (FLVADHREHH…QLYFFVEGPA (99 aa)). Residues 339–369 (PLHDVSDDASSDASSPTGHQTLSKEMSLNTA) form a disordered region. Over residues 354-369 (PTGHQTLSKEMSLNTA) the composition is skewed to polar residues.

It belongs to the asfivirus EP364R family.

Functionally, plays a role in the inhibition of type I interferon signaling pathway. Mechanistically, specifically interacts with 2',3'-cGAMP and cleaves it via its phosphodiesterase activity. In turn, prevents 2',3'-cGAMP interaction with host ER-resident STING1 leading to inhibition of downstream signaling pathway and type I interferon production. In African swine fever virus (isolate Tick/South Africa/Pretoriuskop Pr4/1996) (ASFV), this protein is ERCC4 domain-containing protein EP364R.